Consider the following 601-residue polypeptide: Molybdenum cofactor synthesis protein cinnamon (601 aa).

Residues 3-153 form an MPT adenylyltransferase region; sequence SITFGVLTIS…TISALLPHAV (151 aa). The disordered stretch occupies residues 173–195; it reads SAQKSHICPHKTGTGTDSDRNSP. The interval 184-596 is MPT Mo-transferase; that stretch reads TGTGTDSDRN…FPASVLRFDF (413 aa). A Phosphoserine modification is found at S376.

In the N-terminal section; belongs to the MoaB/Mog family. The protein in the C-terminal section; belongs to the MoeA family. Mg(2+) serves as cofactor.

The catalysed reaction is molybdopterin + ATP + H(+) = adenylyl-molybdopterin + diphosphate. The enzyme catalyses adenylyl-molybdopterin + molybdate = Mo-molybdopterin + AMP + H(+). The protein operates within cofactor biosynthesis; molybdopterin biosynthesis. Functionally, catalyzes two steps in the biosynthesis of the molybdenum cofactor. In the first step, molybdopterin is adenylated. Subsequently, molybdate is inserted into adenylated molybdopterin and AMP is released. This is Molybdenum cofactor synthesis protein cinnamon (cin) from Drosophila melanogaster (Fruit fly).